A 169-amino-acid chain; its full sequence is Orotate phosphoribosyltransferase (169 aa).

Residues arginine 86, lysine 90, histidine 92, and 111–119 (EDVTTSGGS) contribute to the 5-phospho-alpha-D-ribose 1-diphosphate site. Orotate contacts are provided by threonine 115 and arginine 143.

It belongs to the purine/pyrimidine phosphoribosyltransferase family. PyrE subfamily. As to quaternary structure, homodimer. It depends on Mg(2+) as a cofactor.

It catalyses the reaction orotidine 5'-phosphate + diphosphate = orotate + 5-phospho-alpha-D-ribose 1-diphosphate. It participates in pyrimidine metabolism; UMP biosynthesis via de novo pathway; UMP from orotate: step 1/2. Catalyzes the transfer of a ribosyl phosphate group from 5-phosphoribose 1-diphosphate to orotate, leading to the formation of orotidine monophosphate (OMP). The protein is Orotate phosphoribosyltransferase of Methanocorpusculum labreanum (strain ATCC 43576 / DSM 4855 / Z).